We begin with the raw amino-acid sequence, 971 residues long: Isoleucine--tRNA ligase (971 aa).

A 'HIGH' region motif is present at residues Pro-64–His-74. Position 602 (Glu-602) interacts with L-isoleucyl-5'-AMP. Residues Lys-643 to Ser-647 carry the 'KMSKS' region motif. Lys-646 contacts ATP.

This sequence belongs to the class-I aminoacyl-tRNA synthetase family. IleS type 1 subfamily. Monomer.

It is found in the cytoplasm. It catalyses the reaction tRNA(Ile) + L-isoleucine + ATP = L-isoleucyl-tRNA(Ile) + AMP + diphosphate. Catalyzes the attachment of isoleucine to tRNA(Ile). As IleRS can inadvertently accommodate and process structurally similar amino acids such as valine, to avoid such errors it has two additional distinct tRNA(Ile)-dependent editing activities. One activity is designated as 'pretransfer' editing and involves the hydrolysis of activated Val-AMP. The other activity is designated 'posttransfer' editing and involves deacylation of mischarged Val-tRNA(Ile). The protein is Isoleucine--tRNA ligase of Bartonella henselae (strain ATCC 49882 / DSM 28221 / CCUG 30454 / Houston 1) (Rochalimaea henselae).